A 94-amino-acid chain; its full sequence is MNIKPLADRVVLKPIEAEEKTAFGIIVPDTAKEKPQQGEVVAVGIGRLLDNGERAALEVAVGDRVIYSKYSGTEIKIEGKEYLILNERDILAKL.

Belongs to the GroES chaperonin family. Heptamer of 7 subunits arranged in a ring. Interacts with the chaperonin GroEL.

The protein localises to the cytoplasm. Together with the chaperonin GroEL, plays an essential role in assisting protein folding. The GroEL-GroES system forms a nano-cage that allows encapsulation of the non-native substrate proteins and provides a physical environment optimized to promote and accelerate protein folding. GroES binds to the apical surface of the GroEL ring, thereby capping the opening of the GroEL channel. This chain is Co-chaperonin GroES, found in Heliobacterium modesticaldum (strain ATCC 51547 / Ice1).